Here is an 852-residue protein sequence, read N- to C-terminus: Disrupted in schizophrenia 1 homolog (852 aa).

3 disordered regions span residues 1–86, 236–264, and 280–320; these read MQGG…GLDP, EAEP…PRHL, and QVTR…QGGG. Residues 1-294 form an interaction with MAP1A region; the sequence is MQGGGPRGAP…SSRQSECGTV (294 aa). The span at 65–79 shows a compositional bias: polar residues; it reads AGLTGQQSQHSQSKA. Basic and acidic residues predominate over residues 253–263; it reads SSDRPHGDPRH. The span at 288–311 shows a compositional bias: low complexity; the sequence is QSECGTVSSSSSDTGFSSQDASSA. Positions 295–693 are interaction with TRAF3IP1; the sequence is SSSSSDTGFS…LGRVWKADLE (399 aa). 2 coiled-coil regions span residues 367-397 and 449-496; these read EDGD…ALPS and ITRR…LLRW. The tract at residues 437-594 is required for localization to punctate cytoplasmic foci; that stretch reads LRTTAQDSLP…LLEAKMLALS (158 aa). Positions 443 to 852 are necessary and sufficient for interaction with PCNT and localization at the centrosome; the sequence is DSLPASITRR…PTAGAQETEA (410 aa). The interaction with ATF4 and ATF5 stretch occupies residues 595-852; the sequence is GSCFSTAKEL…PTAGAQETEA (258 aa). 2 disordered regions span residues 706–746 and 833–852; these read EAGS…KSPL and KEAG…ETEA. Positions 728–852 are interaction with NDEL1 and PAFAH1B1; that stretch reads TAALAVPRTP…PTAGAQETEA (125 aa). The tract at residues 728–852 is interaction with PAFAH1B1; sequence TAALAVPRTP…PTAGAQETEA (125 aa). The segment at 802 to 835 is interaction with NDEL1; the sequence is SHDEALFQSLQGELQTVKETLQAMILQLQPTKEA.

In terms of assembly, interacts with NDEL1. Interacts with CCDC88A (via C-terminus); the interaction is direct. Interacts with GSK3B. Interacts with tubulin alpha, ACTN2, ANKHD1, ATF4, ATF5, CEP63, EIF3S3, MAP1A, NDEL1, PAFAH1B1, RANBP9, SPTBN4, SYNE1 and TRAF3IP1. Interaction with microtubules may be mediated in part by TRAF3IP1. Interacts (via C-terminal) with PCNT. Interacts with CHCHD6. Interacts with CCDC141. Interacts with FBXW7, the substrate-recognition component of a SCF (SKP1-CUL1-F-box protein) E3 ubiquitin-protein ligase complex; the interaction targets DISC1 for proteasomal degradation. Interacts with ZNF365. Interacts with ATF4; inhibiting ATF4 transcription factor activity by disrupting ATF4 dimerization and DNA-binding. Interacts with PDE4B. Post-translationally, ubiquitinated. Ubiquitination with 'Lys-48'-linked polyubiquitin chains leads to its proteasomal degradation. In terms of tissue distribution, expressed in granule cell precursors within the dentate migratory stream during the first week of postnatal life and in differentiated granule cells of the hippocampus (at protein level). Detected in heart, brain, kidney, and testis. Expressed in dentate gyrus, hippocampus and in the olfactory bulb.

It is found in the cytoplasm. The protein localises to the cytoskeleton. It localises to the mitochondrion. Its subcellular location is the microtubule organizing center. The protein resides in the centrosome. It is found in the postsynaptic density. Functionally, involved in the regulation of multiple aspects of embryonic and adult neurogenesis. Required for neural progenitor proliferation in the ventrical/subventrical zone during embryonic brain development and in the adult dentate gyrus of the hippocampus. Participates in the Wnt-mediated neural progenitor proliferation as a positive regulator by modulating GSK3B activity and CTNNB1 abundance. Plays a role as a modulator of the AKT-mTOR signaling pathway controlling the tempo of the process of newborn neurons integration during adult neurogenesis, including neuron positioning, dendritic development and synapse formation. Inhibits the activation of AKT-mTOR signaling upon interaction with CCDC88A. Regulates the migration of early-born granule cell precursors toward the dentate gyrus during the hippocampal development. Inhibits ATF4 transcription factor activity in neurons by disrupting ATF4 dimerization and DNA-binding. Plays a role, together with PCNT, in the microtubule network formation. The polypeptide is Disrupted in schizophrenia 1 homolog (Mus musculus (Mouse)).